Reading from the N-terminus, the 238-residue chain is 1-(5-phosphoribosyl)-5-[(5-phosphoribosylamino)methylideneamino] imidazole-4-carboxamide isomerase (238 aa).

Asp-8 functions as the Proton acceptor in the catalytic mechanism. Asp-129 functions as the Proton donor in the catalytic mechanism.

It belongs to the HisA/HisF family.

The protein localises to the cytoplasm. It catalyses the reaction 1-(5-phospho-beta-D-ribosyl)-5-[(5-phospho-beta-D-ribosylamino)methylideneamino]imidazole-4-carboxamide = 5-[(5-phospho-1-deoxy-D-ribulos-1-ylimino)methylamino]-1-(5-phospho-beta-D-ribosyl)imidazole-4-carboxamide. Its pathway is amino-acid biosynthesis; L-histidine biosynthesis; L-histidine from 5-phospho-alpha-D-ribose 1-diphosphate: step 4/9. The protein is 1-(5-phosphoribosyl)-5-[(5-phosphoribosylamino)methylideneamino] imidazole-4-carboxamide isomerase of Lacticaseibacillus casei (strain BL23) (Lactobacillus casei).